A 473-amino-acid polypeptide reads, in one-letter code: Ribosomal RNA small subunit methyltransferase F (473 aa).

S-adenosyl-L-methionine contacts are provided by residues 124–130, Glu-148, Asp-175, and Asp-193; that span reads ASAPGSK. Cys-246 serves as the catalytic Nucleophile.

This sequence belongs to the class I-like SAM-binding methyltransferase superfamily. RsmB/NOP family.

The protein resides in the cytoplasm. It catalyses the reaction cytidine(1407) in 16S rRNA + S-adenosyl-L-methionine = 5-methylcytidine(1407) in 16S rRNA + S-adenosyl-L-homocysteine + H(+). Its function is as follows. Specifically methylates the cytosine at position 1407 (m5C1407) of 16S rRNA. This Aliivibrio salmonicida (strain LFI1238) (Vibrio salmonicida (strain LFI1238)) protein is Ribosomal RNA small subunit methyltransferase F.